Reading from the N-terminus, the 421-residue chain is Flap endonuclease 1 (421 aa).

The segment at 1 to 109 (MGIKGLAKLL…HELIKRREKR (109 aa)) is N-domain. Mg(2+) is bound at residue D34. DNA contacts are provided by R47 and R75. The Mg(2+) site is built by D91, E163, E165, D184, and D186. Residues 127 to 258 (EQDKQSKRLV…KTALKLIREH (132 aa)) form an I-domain region. Residue E163 coordinates DNA. Residues G236 and D238 each contribute to the DNA site. Position 238 (D238) interacts with Mg(2+). The segment at 284 to 307 (KKLDAQSDDDDEEGVESPSKEENN) is disordered. The span at 289–298 (QSDDDDEEGV) shows a compositional bias: acidic residues. The interval 379 to 387 (PQTRMDSFF) is interaction with PCNA. The tract at residues 398–421 (SAAKRKADAAKAKAAVSKKKTKKH) is disordered.

Belongs to the XPG/RAD2 endonuclease family. FEN1 subfamily. In terms of assembly, interacts with PCNA. Three molecules of FEN1 bind to one PCNA trimer with each molecule binding to one PCNA monomer. PCNA stimulates the nuclease activity without altering cleavage specificity. It depends on Mg(2+) as a cofactor. Phosphorylated. Phosphorylation upon DNA damage induces relocalization to the nuclear plasma.

It is found in the nucleus. The protein localises to the nucleolus. Its subcellular location is the nucleoplasm. The protein resides in the mitochondrion. Functionally, structure-specific nuclease with 5'-flap endonuclease and 5'-3' exonuclease activities involved in DNA replication and repair. During DNA replication, cleaves the 5'-overhanging flap structure that is generated by displacement synthesis when DNA polymerase encounters the 5'-end of a downstream Okazaki fragment. It enters the flap from the 5'-end and then tracks to cleave the flap base, leaving a nick for ligation. Also involved in the long patch base excision repair (LP-BER) pathway, by cleaving within the apurinic/apyrimidinic (AP) site-terminated flap. Acts as a genome stabilization factor that prevents flaps from equilibrating into structures that lead to duplications and deletions. Also possesses 5'-3' exonuclease activity on nicked or gapped double-stranded DNA, and exhibits RNase H activity. Also involved in replication and repair of rDNA and in repairing mitochondrial DNA. The sequence is that of Flap endonuclease 1 from Phaeodactylum tricornutum (strain CCAP 1055/1).